Consider the following 131-residue polypeptide: Holo-[acyl-carrier-protein] synthase (131 aa).

Mg(2+)-binding residues include aspartate 8 and glutamate 57.

The protein belongs to the P-Pant transferase superfamily. AcpS family. Mg(2+) is required as a cofactor.

The protein localises to the cytoplasm. The catalysed reaction is apo-[ACP] + CoA = holo-[ACP] + adenosine 3',5'-bisphosphate + H(+). In terms of biological role, transfers the 4'-phosphopantetheine moiety from coenzyme A to a Ser of acyl-carrier-protein. The chain is Holo-[acyl-carrier-protein] synthase from Desulforudis audaxviator (strain MP104C).